Consider the following 269-residue polypeptide: 3-methyl-2-oxobutanoate hydroxymethyltransferase (269 aa).

Asp50 and Asp89 together coordinate Mg(2+). 3-methyl-2-oxobutanoate is bound by residues 50–51, Asp89, and Lys118; that span reads DS. Glu120 lines the Mg(2+) pocket. Catalysis depends on Glu187, which acts as the Proton acceptor.

This sequence belongs to the PanB family. As to quaternary structure, homodecamer; pentamer of dimers. Mg(2+) is required as a cofactor.

Its subcellular location is the cytoplasm. The enzyme catalyses 3-methyl-2-oxobutanoate + (6R)-5,10-methylene-5,6,7,8-tetrahydrofolate + H2O = 2-dehydropantoate + (6S)-5,6,7,8-tetrahydrofolate. It participates in cofactor biosynthesis; (R)-pantothenate biosynthesis; (R)-pantoate from 3-methyl-2-oxobutanoate: step 1/2. Its function is as follows. Catalyzes the reversible reaction in which hydroxymethyl group from 5,10-methylenetetrahydrofolate is transferred onto alpha-ketoisovalerate to form ketopantoate. The protein is 3-methyl-2-oxobutanoate hydroxymethyltransferase of Nitrosomonas europaea (strain ATCC 19718 / CIP 103999 / KCTC 2705 / NBRC 14298).